A 156-amino-acid polypeptide reads, in one-letter code: Small ribosomal subunit protein uS7 (156 aa).

This sequence belongs to the universal ribosomal protein uS7 family. As to quaternary structure, part of the 30S ribosomal subunit. Contacts proteins S9 and S11.

Functionally, one of the primary rRNA binding proteins, it binds directly to 16S rRNA where it nucleates assembly of the head domain of the 30S subunit. Is located at the subunit interface close to the decoding center, probably blocks exit of the E-site tRNA. This chain is Small ribosomal subunit protein uS7, found in Psychromonas ingrahamii (strain DSM 17664 / CCUG 51855 / 37).